The sequence spans 544 residues: MAAKQVLFSDEARAKMLDGVNTLANAVKVTLGPKGRNVVLDKSFGTPTITKDGVSVAKEIELEDKFENMGAQIVKEVASKTADVAGDGTTTATVLAQALLTEGLKAVAAGMNPMDLKRGIDKATARLVEELKALSKPCSDPKSIEQVGTISANSDATVGKLIADAMAKVGKEGVITVEEGKGFEDELDVVEGMQFDRGYLSPYFATNQENMTTDLENPYILIVDKKISNIRDLLPILEGVSKSGRALLIIAEDVESEALATLVVNNMRGVVKVCAVKAPGFGDRRKAMLEDIATLTGATFVSEDLSMKLEETNMEHLGTASRVQVTKDNTTIIDGAGEKEAIAKRINVIKANIAEANSDYDREKLQERLAKLSGGVAVIKVGAVTEAEMKEKKDRVDDALHATRAAVEEGIVAGGGVALIRAQKALDGLTGENDDQNYGIALLRKAIEAPLRQIVSNAGGESSVVVNQVKANQGNYGYNAANDTYGDMVEMGILDPTKVTRSALQHAASIAGLMITTEAMIGEIKEAAPAMPMGGGMGGMPGMM.

ATP is bound by residues 30 to 33, K51, 87 to 91, G415, 479 to 481, and D495; these read TLGP, DGTTT, and NAA.

Belongs to the chaperonin (HSP60) family. In terms of assembly, forms a cylinder of 14 subunits composed of two heptameric rings stacked back-to-back. Interacts with the co-chaperonin GroES.

Its subcellular location is the cytoplasm. It catalyses the reaction ATP + H2O + a folded polypeptide = ADP + phosphate + an unfolded polypeptide.. Functionally, together with its co-chaperonin GroES, plays an essential role in assisting protein folding. The GroEL-GroES system forms a nano-cage that allows encapsulation of the non-native substrate proteins and provides a physical environment optimized to promote and accelerate protein folding. This Francisella tularensis subsp. tularensis (strain SCHU S4 / Schu 4) protein is Chaperonin GroEL.